Here is a 59-residue protein sequence, read N- to C-terminus: U17-myrmicitoxin-Tb1f (59 aa).

The signal sequence occupies residues 1-27; it reads MEKNRTTTFSVYLTIILFLISTFITMV. A propeptide spanning residues 28-31 is cleaved from the precursor; the sequence is ITES. His-58 is modified (histidine amide).

In terms of tissue distribution, expressed by the venom gland.

It is found in the secreted. The chain is U17-myrmicitoxin-Tb1f from Tetramorium bicarinatum (Tramp ant).